The chain runs to 164 residues: S-ribosylhomocysteine lyase (164 aa).

Residues H61, H65, and C131 each coordinate Fe cation.

Belongs to the LuxS family. Homodimer. Fe cation is required as a cofactor.

The catalysed reaction is S-(5-deoxy-D-ribos-5-yl)-L-homocysteine = (S)-4,5-dihydroxypentane-2,3-dione + L-homocysteine. Functionally, involved in the synthesis of autoinducer 2 (AI-2) which is secreted by bacteria and is used to communicate both the cell density and the metabolic potential of the environment. The regulation of gene expression in response to changes in cell density is called quorum sensing. Catalyzes the transformation of S-ribosylhomocysteine (RHC) to homocysteine (HC) and 4,5-dihydroxy-2,3-pentadione (DPD). This Bifidobacterium longum (strain NCC 2705) protein is S-ribosylhomocysteine lyase.